Reading from the N-terminus, the 298-residue chain is Tyrosine recombinase XerD (298 aa).

One can recognise a Core-binding (CB) domain in the interval 2 to 87 (KQELARIEQF…AVRRLFQYLY (86 aa)). The Tyr recombinase domain occupies 108–292 (RLPKDLSEAQ…ATERLRQLHQ (185 aa)). Residues Arg148, Lys172, His244, Arg247, and His270 contribute to the active site. Tyr279 functions as the O-(3'-phospho-DNA)-tyrosine intermediate in the catalytic mechanism.

It belongs to the 'phage' integrase family. XerD subfamily. In terms of assembly, forms a cyclic heterotetrameric complex composed of two molecules of XerC and two molecules of XerD, in which XerC interacts with XerD via its C-terminal region, XerD interacts with XerC via its C-terminal region and so on.

The protein localises to the cytoplasm. With respect to regulation, ftsK may regulate the catalytic switch between XerC and XerD in the heterotetrameric complex during the two steps of the recombination process. Its function is as follows. Site-specific tyrosine recombinase, which acts by catalyzing the cutting and rejoining of the recombining DNA molecules. Binds cooperatively to specific DNA consensus sequences that are separated from XerC binding sites by a short central region, forming the heterotetrameric XerC-XerD complex that recombines DNA substrates. The complex is essential to convert dimers of the bacterial chromosome into monomers to permit their segregation at cell division. It also contributes to the segregational stability of plasmids. In the complex XerD specifically exchanges the bottom DNA strands. The sequence is that of Tyrosine recombinase XerD from Shigella flexneri.